Reading from the N-terminus, the 154-residue chain is Urease accessory protein UreE (154 aa).

Belongs to the UreE family.

It localises to the cytoplasm. Involved in urease metallocenter assembly. Binds nickel. Probably functions as a nickel donor during metallocenter assembly. This is Urease accessory protein UreE from Rhizobium meliloti (strain 1021) (Ensifer meliloti).